The sequence spans 774 residues: Lysyl oxidase homolog 2 (774 aa).

A signal peptide spans 1–24 (MEGFLGFNHNHCFIVLFFVSLSLA). 4 SRCR domains span residues 57–158 (LRLA…VVCS), 187–301 (IRPI…ASCV), 325–424 (VRLK…VRCN), and 434–543 (LRLV…VSCS). 9 cysteine pairs are disulfide-bonded: C83–C147, C96–C157, C127–C137, C217–C290, C230–C300, C264–C274, C350–C413, C363–C423, and C394–C404. N287 carries N-linked (GlcNAc...) asparagine glycosylation. Residue N454 is glycosylated (N-linked (GlcNAc...) asparagine). 3 disulfide bridges follow: C463–C529, C476–C542, and C510–C520. The interval 547–751 (PDLVLNAELV…MYNSVHNGAN (205 aa)) is lysyl-oxidase like. Residues D548 and L549 each contribute to the Ca(2+) site. Cystine bridges form between C572–C624, C578–C694, C656–C672, and C662–C684. The Cu cation site is built by H625, H627, and H629. An N-linked (GlcNAc...) asparagine glycan is attached at N643. Positions 652–688 (KASFCLEDTECEADVQKQYECANFGEQGITVGCWDVY) form a cross-link, lysine tyrosylquinone (Lys-Tyr). Position 688 is a 2',4',5'-topaquinone (Y688). E721, D723, N726, and N727 together coordinate Ca(2+).

Belongs to the lysyl oxidase family. Cu cation is required as a cofactor. Lysine tyrosylquinone residue serves as cofactor. Post-translationally, the lysine tyrosylquinone cross-link (LTQ) is generated by condensation of the epsilon-amino group of a lysine with a topaquinone produced by oxidation of tyrosine.

Its subcellular location is the secreted. The protein resides in the extracellular space. The protein localises to the extracellular matrix. It is found in the basement membrane. It localises to the nucleus. Its subcellular location is the chromosome. The protein resides in the endoplasmic reticulum. It catalyses the reaction L-lysyl-[protein] + O2 + H2O = (S)-2-amino-6-oxohexanoyl-[protein] + H2O2 + NH4(+). Mediates the post-translational oxidative deamination of lysine residues on target proteins leading to the formation of deaminated lysine (allysine). Acts as a transcription corepressor and specifically mediates deamination of trimethylated 'Lys-4' of histone H3 (H3K4me3), a specific tag for epigenetic transcriptional activation. Shows no activity against histone H3 when it is trimethylated on 'Lys-9' (H3K9me3) or 'Lys-27' (H3K27me3) or when 'Lys-4' is monomethylated (H3K4me1) or dimethylated (H3K4me2). Also mediates deamination of methylated TAF10, a member of the transcription factor IID (TFIID) complex, which induces release of TAF10 from promoters, leading to inhibition of TFIID-dependent transcription. LOXL2-mediated deamination of TAF10 results in transcriptional repression of genes required for embryonic stem cell pluripotency including POU5F1/OCT4, NANOG, KLF4 and SOX2. Involved in epithelial to mesenchymal transition (EMT) via interaction with SNAI1 and participates in repression of E-cadherin CDH1, probably by mediating deamination of histone H3. During EMT, involved with SNAI1 in negatively regulating pericentromeric heterochromatin transcription. SNAI1 recruits LOXL2 to pericentromeric regions to oxidize histone H3 and repress transcription which leads to release of heterochromatin component CBX5/HP1A, enabling chromatin reorganization and acquisition of mesenchymal traits. Interacts with the endoplasmic reticulum protein HSPA5 which activates the IRE1-XBP1 pathway of the unfolded protein response, leading to expression of several transcription factors involved in EMT and subsequent EMT induction. When secreted into the extracellular matrix, promotes cross-linking of extracellular matrix proteins by mediating oxidative deamination of peptidyl lysine residues in precursors to fibrous collagen and elastin. Acts as a regulator of sprouting angiogenesis, probably via collagen IV scaffolding. Acts as a regulator of chondrocyte differentiation, probably by regulating expression of factors that control chondrocyte differentiation. In Gallus gallus (Chicken), this protein is Lysyl oxidase homolog 2 (LOXL2).